The sequence spans 383 residues: 1-deoxy-D-xylulose 5-phosphate reductoisomerase (383 aa).

NADPH contacts are provided by threonine 10, glycine 11, serine 12, isoleucine 13, asparagine 38, and asparagine 121. Lysine 122 serves as a coordination point for 1-deoxy-D-xylulose 5-phosphate. Residue glutamate 123 coordinates NADPH. Aspartate 147 lines the Mn(2+) pocket. 1-deoxy-D-xylulose 5-phosphate-binding residues include serine 148, glutamate 149, serine 172, and histidine 195. Mn(2+) is bound at residue glutamate 149. Glycine 201 serves as a coordination point for NADPH. Serine 208, asparagine 213, lysine 214, and glutamate 217 together coordinate 1-deoxy-D-xylulose 5-phosphate. Glutamate 217 is a binding site for Mn(2+).

It belongs to the DXR family. Requires Mg(2+) as cofactor. Mn(2+) is required as a cofactor.

It carries out the reaction 2-C-methyl-D-erythritol 4-phosphate + NADP(+) = 1-deoxy-D-xylulose 5-phosphate + NADPH + H(+). The protein operates within isoprenoid biosynthesis; isopentenyl diphosphate biosynthesis via DXP pathway; isopentenyl diphosphate from 1-deoxy-D-xylulose 5-phosphate: step 1/6. In terms of biological role, catalyzes the NADPH-dependent rearrangement and reduction of 1-deoxy-D-xylulose-5-phosphate (DXP) to 2-C-methyl-D-erythritol 4-phosphate (MEP). The polypeptide is 1-deoxy-D-xylulose 5-phosphate reductoisomerase (Vesicomyosocius okutanii subsp. Calyptogena okutanii (strain HA)).